The primary structure comprises 347 residues: Large ribosomal subunit protein uL10 (347 aa).

The disordered stretch occupies residues 312 to 347 (AAAPAEEEVKKEEEPEEEEEDHAEEDGMAGLGALFG). The span at 325 to 338 (EPEEEEEDHAEEDG) shows a compositional bias: acidic residues.

The protein belongs to the universal ribosomal protein uL10 family. As to quaternary structure, part of the 50S ribosomal subunit. Forms part of the ribosomal stalk which helps the ribosome interact with GTP-bound translation factors. Forms a heptameric L10(L12)2(L12)2(L12)2 complex, where L10 forms an elongated spine to which the L12 dimers bind in a sequential fashion.

Forms part of the ribosomal stalk, playing a central role in the interaction of the ribosome with GTP-bound translation factors. This chain is Large ribosomal subunit protein uL10, found in Methanosarcina acetivorans (strain ATCC 35395 / DSM 2834 / JCM 12185 / C2A).